Here is a 300-residue protein sequence, read N- to C-terminus: Energy-coupling factor transporter ATP-binding protein EcfA2 (300 aa).

Residues 3 to 258 form the ABC transporter domain; sequence IKAKNIVKIY…NKFLIENKML (256 aa). 40-47 serves as a coordination point for ATP; that stretch reads GQTGSGKT.

It belongs to the ABC transporter superfamily. Energy-coupling factor EcfA family. In terms of assembly, forms a stable energy-coupling factor (ECF) transporter complex composed of 2 membrane-embedded substrate-binding proteins (S component), 2 ATP-binding proteins (A component) and 2 transmembrane proteins (T component).

Its subcellular location is the cell membrane. ATP-binding (A) component of a common energy-coupling factor (ECF) ABC-transporter complex. Unlike classic ABC transporters this ECF transporter provides the energy necessary to transport a number of different substrates. In Mesomycoplasma hyopneumoniae (strain 7448) (Mycoplasma hyopneumoniae), this protein is Energy-coupling factor transporter ATP-binding protein EcfA2.